A 1017-amino-acid polypeptide reads, in one-letter code: DNA polymerase (1017 aa).

This sequence belongs to the DNA polymerase type-B family. As to quaternary structure, heterodimer with the terminal protein; this heterodimer binds to bp 9 to 18 of the genome. Forms a complex with viral pTP, DBP and hosts NFIA and POU2F1/OCT1 for initiation of replication.

The protein resides in the host nucleus. The enzyme catalyses DNA(n) + a 2'-deoxyribonucleoside 5'-triphosphate = DNA(n+1) + diphosphate. Its function is as follows. Eukaryotic-type DNA polymerase involved in viral genomic replication. DNA synthesis is protein primed, and acts in a strand displacement replication. Assembles in complex with viral pTP, DBP, host NFIA and host POU2F1/OCT1 on viral origin of replication. The polymerase covalently transfers dCMP onto pTP, thereby initiating complementary strand synthesis. This chain is DNA polymerase, found in Bovine adenovirus 2 (BAdV-2).